Here is a 393-residue protein sequence, read N- to C-terminus: Iripin-3 (393 aa).

Residues 1-16 (MKVITAFLSVFVLCSA) form the signal peptide. N-linked (GlcNAc...) asparagine glycosylation is found at Asn-104 and Asn-265.

The protein belongs to the serpin family. In terms of assembly, interacts with human KLKB1. Interacts with human ST14. Interacts with human F2 (thrombin). In terms of tissue distribution, saliva (at protein level). Expressed in salivary gland. Expressed in ovary during blood feeding.

Its subcellular location is the secreted. Its function is as follows. Serine protease inhibitor that modulates blood feeding of ticks on vertebrate species. Moderately inhibits host plasma kallikrein (KLKB1), matriptase (ST14), trypsin, plasmin (PLG), thrombin (F2) and coagulation factor VIIa (F7). Slightly inhibits host alpha-chymotrypsin, tPA/tissue-type plasminogen activator (PLAT), uPA/urokinase-type plasminogen activator (PLAU) and coagulation factor XIIa (F12). Slightly inhibits the extrinsic pathway while not affecting the intrinsic and common pathways of host blood coagulation. Decreases synthesis and secretion of IL6 by mouse bone marrow-derived macrophages. Decreases viability of mouse B- and T-cells. Decreases proliferation of mouse CD4+ T-cells in response to stimulation. Inhibits Th1 immune responses in mouse cells. Promotes differentiation of mouse regulatory T-cells. The sequence is that of Iripin-3 from Ixodes ricinus (Common tick).